Here is a 258-residue protein sequence, read N- to C-terminus: MDGIVEQKSVLVHSKIGDAGKRNGLINTRNFMAESRDGLVSVYPAPQYQSHRLVASAAPGSLEGGRSDPVQQLLDPNTLQQSVDSHYRPNIILYSDGVLRSWGDGVATDCCETTFIEDRSPTKDSLEYPDGKFIDLSGDDIKIHTLSYDVEEEEELQELESDYSSDTESEDNFLMMPPRDHLGLSVFSMLCCFWPLGIAAFYLSHETNKAVAKGDFHQASTSSRRALFLAVLSITIGTGIYVGVAVALIAYLSKNNHL.

Residues 1 to 181 lie on the Cytoplasmic side of the membrane; the sequence is MDGIVEQKSV…NFLMMPPRDH (181 aa). S137 is subject to Phosphoserine. The helical transmembrane segment at 182 to 202 threads the bilayer; the sequence is LGLSVFSMLCCFWPLGIAAFY. Over 203 to 228 the chain is Extracellular; sequence LSHETNKAVAKGDFHQASTSSRRALF. Residues 229-249 constitute an intramembrane region (helical); sequence LAVLSITIGTGIYVGVAVALI. Over 250–258 the chain is Extracellular; that stretch reads AYLSKNNHL.

It belongs to the CD225/Dispanin family. As to quaternary structure, homodimer. Interacts with GRIA1 and GRIA2. As to expression, enriched in the cerebellum and also expressed in the neocortex and modestly in the hippocampus (at protein level). Expressed in hippocampal neurons, both in cell body and neurites, however its presence is enriched at excitatory synapses and also found in postsynaptic cells.

Its subcellular location is the cell membrane. It localises to the early endosome membrane. The protein resides in the postsynaptic density membrane. The protein localises to the synapse. It is found in the cell projection. Its subcellular location is the dendrite. It localises to the dendritic spine. Its function is as follows. May regulate AMPA receptor content at nascent synapses, and have a role in postsynaptic development and maturation. The polypeptide is Synapse differentiation-inducing gene protein 1 (Syndig1) (Rattus norvegicus (Rat)).